The sequence spans 704 residues: Pentatricopeptide repeat-containing protein At4g28010 (704 aa).

PPR repeat units follow at residues 71-105 (LAFAGNNLMAKLVRSRNHELAFSFYRKMLETDTFI), 106-140 (NFVSLSGLLECYVQMRKTGFAFGVLALMLKRGFAF), 141-175 (NVYNHNILLKGLCRNLECGKAVSLLREMRRNSLMP), 176-210 (DVFSYNTVIRGFCEGKELEKALELANEMKGSGCSW), 211-245 (SLVTWGILIDAFCKAGKMDEAMGFLKEMKFMGLEA), 246-280 (DLVVYTSLIRGFCDCGELDRGKALFDEVLERGDSP), 281-315 (CAITYNTLIRGFCKLGQLKEASEIFEFMIERGVRP), 316-350 (NVYTYTGLIDGLCGVGKTKEALQLLNLMIEKDEEP), 351-385 (NAVTYNIIINKLCKDGLVADAVEIVELMKKRRTRP), 386-416 (DNITYNILLGGLCAKGDLDEASKLLYLMLKD), 423-453 (DVISYNALIHGLCKENRLHQALDIYDLLVEK), 458-492 (DRVTTNILLNSTLKAGDVNKAMELWKQISDSKIVR), 493-527 (NSDTYTAMIDGFCKTGMLNVAKGLLCKMRVSELQP), 528-562 (SVFDYNCLLSSLCKEGSLDQAWRLFEEMQRDNNFP), 563-597 (DVVSFNIMIDGSLKAGDIKSAESLLVGMSRAGLSP), 598-632 (DLFTYSKLINRFLKLGYLDEAISFFDKMVDSGFEP), and 633-667 (DAHICDSVLKYCISQGETDKLTELVKKLVDKDIVL).

This sequence belongs to the PPR family. P subfamily.

The polypeptide is Pentatricopeptide repeat-containing protein At4g28010 (Arabidopsis thaliana (Mouse-ear cress)).